The sequence spans 265 residues: Undecaprenyl-diphosphatase 1 (265 aa).

7 consecutive transmembrane segments (helical) span residues 4 to 24, 42 to 62, 84 to 104, 108 to 128, 184 to 204, 217 to 237, and 245 to 265; these read IIIA…PISS, AKTF…ILYH, FHVF…HDVI, LFQP…MILA, SEFS…LDLL, MFAV…VTFL, and LKPF…FVLL.

The protein belongs to the UppP family.

It is found in the cell membrane. It carries out the reaction di-trans,octa-cis-undecaprenyl diphosphate + H2O = di-trans,octa-cis-undecaprenyl phosphate + phosphate + H(+). In terms of biological role, catalyzes the dephosphorylation of undecaprenyl diphosphate (UPP). Confers resistance to bacitracin. This Bacillus cereus (strain ZK / E33L) protein is Undecaprenyl-diphosphatase 1.